The chain runs to 474 residues: Glutamate--tRNA ligase (474 aa).

The 'HIGH' region motif lies at 10 to 20; it reads PSPTGYLHIGG. Positions 107, 109, 134, and 136 each coordinate Zn(2+). Residues 244-248 carry the 'KMSKS' region motif; it reads RLSKR. Lys247 contributes to the ATP binding site.

This sequence belongs to the class-I aminoacyl-tRNA synthetase family. Glutamate--tRNA ligase type 1 subfamily. Monomer. Requires Zn(2+) as cofactor.

It localises to the cytoplasm. The enzyme catalyses tRNA(Glu) + L-glutamate + ATP = L-glutamyl-tRNA(Glu) + AMP + diphosphate. Functionally, catalyzes the attachment of glutamate to tRNA(Glu) in a two-step reaction: glutamate is first activated by ATP to form Glu-AMP and then transferred to the acceptor end of tRNA(Glu). This is Glutamate--tRNA ligase from Anaeromyxobacter sp. (strain K).